The following is a 705-amino-acid chain: Polyribonucleotide nucleotidyltransferase (705 aa).

Mg(2+) contacts are provided by D487 and D493. The KH domain maps to P554–I613. In terms of domain architecture, S1 motif spans G623–K691.

Belongs to the polyribonucleotide nucleotidyltransferase family. Mg(2+) serves as cofactor.

It localises to the cytoplasm. The enzyme catalyses RNA(n+1) + phosphate = RNA(n) + a ribonucleoside 5'-diphosphate. Involved in mRNA degradation. Catalyzes the phosphorolysis of single-stranded polyribonucleotides processively in the 3'- to 5'-direction. The sequence is that of Polyribonucleotide nucleotidyltransferase from Bacillus licheniformis (strain ATCC 14580 / DSM 13 / JCM 2505 / CCUG 7422 / NBRC 12200 / NCIMB 9375 / NCTC 10341 / NRRL NRS-1264 / Gibson 46).